The primary structure comprises 422 residues: MTKDFKISVSAALISALFSSPYAFANNDEVHFTAVQISPNSDPDSHVMIFQPEVRAPGGTNALAKGTHSIAVGASAEAAERAAVAVGAGSIATGVNSVAIGPLSKALGDSAVTYGAGSTAQKDGVAIGARASTSDTGVAVGFNSKVDAKNSVSIGHSSHVAVDHDYSIAIGDRSKTDRKNSVSIGHESLNRQLTHLAAGTKDTDAVNVAQLKKEIEKTQENANKKSAEVLGIANNYTDSKSAETLENARKEAFDLSNDALDMAKKHSNSVARTTLETAEEHTNKKSAETLASANVYADSKSSHTLKTANSYTDVTVSNSTKKAIRESNQYTDHKFHQLDNRLDKLDTRVDKGLASSAALNSLFQPYGVGKVNFTAGVGGYRSSQALAIGSGYRVNESVALKAGVAYAGSSDVMYNASFNIEW.

The first 25 residues, 1–25, serve as a signal peptide directing secretion; that stretch reads MTKDFKISVSAALISALFSSPYAFA. The interval 26-330 is surface exposed passenger domain; it reads NNDEVHFTAV…KKAIRESNQY (305 aa). A coiled-coil region spans residues 216–362; that stretch reads EKTQENANKK…LASSAALNSL (147 aa). An outer membrane translocation of the passenger domain region spans residues 331 to 369; that stretch reads TDHKFHQLDNRLDKLDTRVDKGLASSAALNSLFQPYGVG. 4 consecutive transmembrane segments (beta stranded) span residues 369–379, 383–394, 401–407, and 411–422; these read GKVNFTAGVGG, SQALAIGSGYRV, KAGVAYA, and DVMYNASFNIEW. The segment at 370–422 is translocator domain; sequence KVNFTAGVGGYRSSQALAIGSGYRVNESVALKAGVAYAGSSDVMYNASFNIEW.

The protein belongs to the autotransporter-2 (AT-2) (TC 1.B.40) family. In terms of assembly, homotrimer.

The protein localises to the cell surface. It is found in the cell outer membrane. Functionally, collagen-binding outer membrane protein forming a fibrillar matrix on the bacterial cell surface. Promotes initial attachment and invasion of eukaryotic cells. Also protects the bacteria by being responsible for agglutination, serum resistance, complement inactivation and phagocytosis resistance. The chain is Adhesin YadA (yadA) from Yersinia enterocolitica.